A 1450-amino-acid polypeptide reads, in one-letter code: ABC transporter G family member 37 (1450 aa).

The ABC transporter 1 domain occupies 175–447 (VKLTGAKTHE…FEDCGFRCPE (273 aa)). ATP is bound at residue 207-214 (GPPSCGKT). An ABC transmembrane type-2 1 domain is found at 525-737 (ELFIACISRE…GEIGLSVNEF (213 aa)). Transmembrane regions (helical) follow at residues 544-564 (VYIF…TVFI), 581-601 (ALFF…SMTA), 615-635 (FYPA…LSFF), 661-681 (FILL…LAAI), 687-707 (ASIT…GFVI), and 773-793 (LCAL…ALTF). Residues 810–838 (SELQGTEKSTEDSSVRKKTTDSPVKTEEE) form a disordered region. A compositionally biased stretch (basic and acidic residues) spans 817–838 (KSTEDSSVRKKTTDSPVKTEEE). The ABC transporter 2 domain maps to 850–1103 (VTFQDLNYFV…IIEYFESVPE (254 aa)). Position 895–902 (895–902 (GVSGAGKT)) interacts with ATP. The 215-residue stretch at 1175–1389 (GQFKSILWKM…TLNGFISSQY (215 aa)) folds into the ABC transmembrane type-2 2 domain. 7 helical membrane passes run 1194-1214 (YNLM…ALFW), 1226-1246 (MFTV…NNCA), 1282-1302 (IPYI…MIGF), 1313-1333 (LYSM…LVSI), 1339-1359 (VAAI…GFLI), 1365-1385 (PGWW…NGFI), and 1422-1442 (VTAV…AFFV).

It belongs to the ABC transporter superfamily. ABCG family. PDR (TC 3.A.1.205) subfamily. In terms of tissue distribution, expressed in roots and, to a lower extent, in seedlings.

Its subcellular location is the cell membrane. Its function is as follows. Together with ABCG36, regulates auxin homeostasis and responses by playing a dual role in coumarin (and derivatives) and in the auxin precursor indole 3-butyric acid (IBA) efflux transport, thus influencing roots and root hairs development. Mediates coumarin exudation in the rhizosphere, especially in iron (Fe) deficient conditions, with a strong specificity for highly oxygenated compounds such as scopoletin and derivatives, dihydroxyscopoletin, esculetin, fraxin, fraxetin and esculin; these molecules improve plant Fe nutrition. Involved in the cellular detoxification of xenobiotics by promoting the excretion of some auxinic herbicides including 2,4-dichlorophenoxyacetic acid (2,4-D), 4-(2,4-dichlorophenoxy)butyric acid (2,4-DB) and other members of the phenoxyalkanoic acid family as well as the polar auxin transport inhibitor, napthylphthalamic acid (NPA). May be a general defense protein. This is ABC transporter G family member 37 from Arabidopsis thaliana (Mouse-ear cress).